A 577-amino-acid polypeptide reads, in one-letter code: Arginine--tRNA ligase (577 aa).

The short motif at 122–132 (PNVAKEMHVGH) is the 'HIGH' region element.

The protein belongs to the class-I aminoacyl-tRNA synthetase family. Monomer.

It localises to the cytoplasm. The enzyme catalyses tRNA(Arg) + L-arginine + ATP = L-arginyl-tRNA(Arg) + AMP + diphosphate. The polypeptide is Arginine--tRNA ligase (Vibrio campbellii (strain ATCC BAA-1116)).